Here is a 764-residue protein sequence, read N- to C-terminus: Polyribonucleotide nucleotidyltransferase (764 aa).

Mg(2+)-binding residues include Asp-541 and Asp-547. Residues Pro-607–Ile-666 enclose the KH domain. Positions Gly-678–Val-747 constitute an S1 motif domain.

It belongs to the polyribonucleotide nucleotidyltransferase family. Mg(2+) is required as a cofactor.

It localises to the cytoplasm. It carries out the reaction RNA(n+1) + phosphate = RNA(n) + a ribonucleoside 5'-diphosphate. Functionally, involved in mRNA degradation. Catalyzes the phosphorolysis of single-stranded polyribonucleotides processively in the 3'- to 5'-direction. This chain is Polyribonucleotide nucleotidyltransferase, found in Nocardia farcinica (strain IFM 10152).